The sequence spans 532 residues: 2,3-bisphosphoglycerate-independent phosphoglycerate mutase (532 aa).

Residues Asp-15 and Ser-65 each coordinate Mn(2+). Ser-65 acts as the Phosphoserine intermediate in catalysis. Residues His-126, 156–157, Arg-188, Arg-194, 258–261, and Lys-331 each bind substrate; these read RD and RPDR. Mn(2+)-binding residues include Asp-398, His-402, Asp-439, His-440, and His-457.

Belongs to the BPG-independent phosphoglycerate mutase family. In terms of assembly, monomer. Requires Mn(2+) as cofactor.

The catalysed reaction is (2R)-2-phosphoglycerate = (2R)-3-phosphoglycerate. Its pathway is carbohydrate degradation; glycolysis; pyruvate from D-glyceraldehyde 3-phosphate: step 3/5. Functionally, catalyzes the interconversion of 2-phosphoglycerate and 3-phosphoglycerate. The sequence is that of 2,3-bisphosphoglycerate-independent phosphoglycerate mutase from Synechocystis sp. (strain ATCC 27184 / PCC 6803 / Kazusa).